The following is a 301-amino-acid chain: Ribosomal RNA small subunit methyltransferase A (301 aa).

6 residues coordinate S-adenosyl-L-methionine: Asn18, Leu20, Gly45, Glu66, Asp91, and Asn112. A disordered region spans residues 267 to 301; the sequence is PPEAAPVKEKRRMAKNKMTEPANNNLNENSAPEVD. The span at 287–301 shows a compositional bias: polar residues; it reads PANNNLNENSAPEVD.

It belongs to the class I-like SAM-binding methyltransferase superfamily. rRNA adenine N(6)-methyltransferase family. RsmA subfamily.

It localises to the cytoplasm. The enzyme catalyses adenosine(1518)/adenosine(1519) in 16S rRNA + 4 S-adenosyl-L-methionine = N(6)-dimethyladenosine(1518)/N(6)-dimethyladenosine(1519) in 16S rRNA + 4 S-adenosyl-L-homocysteine + 4 H(+). Its function is as follows. Specifically dimethylates two adjacent adenosines (A1518 and A1519) in the loop of a conserved hairpin near the 3'-end of 16S rRNA in the 30S particle. May play a critical role in biogenesis of 30S subunits. This is Ribosomal RNA small subunit methyltransferase A from Colwellia psychrerythraea (strain 34H / ATCC BAA-681) (Vibrio psychroerythus).